The primary structure comprises 85 residues: NAD(P)H-quinone oxidoreductase subunit O (85 aa).

This sequence belongs to the complex I NdhO subunit family. As to quaternary structure, NDH-1 can be composed of about 15 different subunits; different subcomplexes with different compositions have been identified which probably have different functions.

The protein localises to the cellular thylakoid membrane. It carries out the reaction a plastoquinone + NADH + (n+1) H(+)(in) = a plastoquinol + NAD(+) + n H(+)(out). It catalyses the reaction a plastoquinone + NADPH + (n+1) H(+)(in) = a plastoquinol + NADP(+) + n H(+)(out). Its function is as follows. NDH-1 shuttles electrons from an unknown electron donor, via FMN and iron-sulfur (Fe-S) centers, to quinones in the respiratory and/or the photosynthetic chain. The immediate electron acceptor for the enzyme in this species is believed to be plastoquinone. Couples the redox reaction to proton translocation, and thus conserves the redox energy in a proton gradient. Cyanobacterial NDH-1 also plays a role in inorganic carbon-concentration. In Synechococcus sp. (strain WH7803), this protein is NAD(P)H-quinone oxidoreductase subunit O.